Reading from the N-terminus, the 310-residue chain is ADP-L-glycero-D-manno-heptose-6-epimerase (310 aa).

NADP(+)-binding positions include 10–11, 31–32, lysine 38, lysine 53, 75–79, and asparagine 92; these read FI, DN, and EGACS. The active-site Proton acceptor is the tyrosine 140. Lysine 144 is a binding site for NADP(+). Residue asparagine 169 participates in substrate binding. Residues valine 170 and lysine 178 each contribute to the NADP(+) site. The active-site Proton acceptor is the lysine 178. Residues serine 180, histidine 187, 201–204, and arginine 209 each bind substrate; that span reads FEGS. Lysine 267 bears the N6-acetyllysine mark. Tyrosine 272 is a binding site for substrate.

It belongs to the NAD(P)-dependent epimerase/dehydratase family. HldD subfamily. In terms of assembly, homopentamer. Requires NADP(+) as cofactor.

The catalysed reaction is ADP-D-glycero-beta-D-manno-heptose = ADP-L-glycero-beta-D-manno-heptose. It participates in nucleotide-sugar biosynthesis; ADP-L-glycero-beta-D-manno-heptose biosynthesis; ADP-L-glycero-beta-D-manno-heptose from D-glycero-beta-D-manno-heptose 7-phosphate: step 4/4. Catalyzes the interconversion between ADP-D-glycero-beta-D-manno-heptose and ADP-L-glycero-beta-D-manno-heptose via an epimerization at carbon 6 of the heptose. The polypeptide is ADP-L-glycero-D-manno-heptose-6-epimerase (Escherichia coli (strain ATCC 8739 / DSM 1576 / NBRC 3972 / NCIMB 8545 / WDCM 00012 / Crooks)).